Reading from the N-terminus, the 462-residue chain is MRSINQLLKQASLSQKSQYNFSQTNLKKVIAEIIPQKQAELKEVKEKYGDKVVGQYTVKQVIGGMRGMKGLMSDLSRCDPYQGIIFRGYTIPQLKEFLPKADPKAADQANQEPLPEGIFWLLMTGQLPTHAQVDALKHEWQNRGTVNQDCVNFILNLPKDLHSMTMLSMALLYLQKDSKFAKLYDEGKISKKDYWEPFYEDSMDLIAKIPRVAAIIYRHKYRDSKLIDSDSKLDWAGNYAHMMGFEQHVVKECIRGYLSIHCDHEGGNVSAHTTHLVGSALSDPYLSYSAGVNGLAGPLHGLANQEVLKWLLQFIEEKGTKVSDKDIEDYVDHVISSGRVVPGYGHAVLRDTDPRFHHQVDFSKFHLKDDQMIKLLHQCADVIPKKLLTYKKIANPYPNVDCHSGVLLYSLGLTEYQYYTVVFAVSRALGCMANLIWSRAFGLPIERPGSADLKWFHDKYRE.

The N-terminal 21 residues, 1–21, are a transit peptide targeting the mitochondrion; that stretch reads MRSINQLLKQASLSQKSQYNF. Catalysis depends on residues His-300, His-346, and Asp-401.

Belongs to the citrate synthase family. As to quaternary structure, homodimer.

It localises to the mitochondrion matrix. The protein localises to the cytoplasm. The protein resides in the cytoskeleton. It catalyses the reaction oxaloacetate + acetyl-CoA + H2O = citrate + CoA + H(+). It functions in the pathway carbohydrate metabolism; tricarboxylic acid cycle; isocitrate from oxaloacetate: step 1/2. Functionally, structural protein involved in oral morphogenesis and in pronuclear behavior during conjugation. Respiratory enzyme. The polypeptide is Citrate synthase, mitochondrial (Tetrahymena thermophila).